A 361-amino-acid chain; its full sequence is Collagenase (361 aa).

This sequence belongs to the peptidase U32 family. Homodimer. It depends on a metal cation as a cofactor.

Activity somewhat enhanced by calcium ions, inhibited by zinc and Fe(3+) ions and by p-chloromercuribenzoic acid and EDTA. Activity is enhanced by salivary peptide cystatin and reduced by salivary peptide histatin. Has collagenase activity. Active on soluble collagen, reconstituted type I collagen, heat denatured type I collagen and azocoll, but not gelatin or the synthetic bacterial collagenase substrate PZ-PLGPA. May play a role in virulence. The polypeptide is Collagenase (Porphyromonas gingivalis (Bacteroides gingivalis)).